Here is a 557-residue protein sequence, read N- to C-terminus: CTP synthase (557 aa).

The amidoligase domain stretch occupies residues 1 to 272 (MARSKIVKHI…DSLVLKKLML (272 aa)). S18 is a CTP binding site. Residue S18 coordinates UTP. Residue 19–24 (SLGKGI) participates in ATP binding. Y59 serves as a coordination point for L-glutamine. D76 contacts ATP. Residues D76 and E146 each coordinate Mg(2+). CTP-binding positions include 153–155 (DIE), 193–198 (KTKPTQ), and K229. UTP is bound by residues 193–198 (KTKPTQ) and K229. In terms of domain architecture, Glutamine amidotransferase type-1 spans 299–543 (EIGVCGKYTK…VAEAKKFRDE (245 aa)). An L-glutamine-binding site is contributed by G363. C390 acts as the Nucleophile; for glutamine hydrolysis in catalysis. Residues 391–394 (LGMQ), E414, and R471 each bind L-glutamine. Residues H516 and E518 contribute to the active site.

This sequence belongs to the CTP synthase family. As to quaternary structure, homotetramer.

It catalyses the reaction UTP + L-glutamine + ATP + H2O = CTP + L-glutamate + ADP + phosphate + 2 H(+). The catalysed reaction is L-glutamine + H2O = L-glutamate + NH4(+). The enzyme catalyses UTP + NH4(+) + ATP = CTP + ADP + phosphate + 2 H(+). The protein operates within pyrimidine metabolism; CTP biosynthesis via de novo pathway; CTP from UDP: step 2/2. Allosterically activated by GTP, when glutamine is the substrate; GTP has no effect on the reaction when ammonia is the substrate. The allosteric effector GTP functions by stabilizing the protein conformation that binds the tetrahedral intermediate(s) formed during glutamine hydrolysis. Inhibited by the product CTP, via allosteric rather than competitive inhibition. Catalyzes the ATP-dependent amination of UTP to CTP with either L-glutamine or ammonia as the source of nitrogen. Regulates intracellular CTP levels through interactions with the four ribonucleotide triphosphates. In Chloroherpeton thalassium (strain ATCC 35110 / GB-78), this protein is CTP synthase.